A 224-amino-acid polypeptide reads, in one-letter code: Pre-hexon-linking protein VIII (224 aa).

A Phosphothreonine; by host modification is found at T64. Positions 112-154 (RQLCPSQIGIKSPVLAGTGIQLSEDIPSASWIRPDGIFQLGGG) are excised as a propeptide.

Belongs to the adenoviridae hexon-linking protein family. As to quaternary structure, interacts with the peripentonal hexons as well as the hexons in the facets. Part of a complex composed of the core-capsid bridging protein, the endosome lysis protein VI and the hexon-linking protein VIII; these interactions bridge the virus core to the capsid. Cleaved by the viral protease during virion maturation. May cause the middle segment to be shed from the capsid.

It localises to the virion. Its subcellular location is the host nucleus. Functionally, structural component of the virion that acts as a cement protein on the capsid interior and which glue the peripentonal hexons and group-of-nine hexons together. This Canis lupus familiaris (Dog) protein is Pre-hexon-linking protein VIII.